The sequence spans 381 residues: Probable tRNA sulfurtransferase (381 aa).

The THUMP domain occupies 57-160 (EKGIEKLKSV…NKAYVYSKKI (104 aa)). Residues 177-178 (ML), 202-203 (YF), R259, G281, and Q290 each bind ATP.

Belongs to the ThiI family.

Its subcellular location is the cytoplasm. The enzyme catalyses [ThiI sulfur-carrier protein]-S-sulfanyl-L-cysteine + a uridine in tRNA + 2 reduced [2Fe-2S]-[ferredoxin] + ATP + H(+) = [ThiI sulfur-carrier protein]-L-cysteine + a 4-thiouridine in tRNA + 2 oxidized [2Fe-2S]-[ferredoxin] + AMP + diphosphate. It catalyses the reaction [ThiS sulfur-carrier protein]-C-terminal Gly-Gly-AMP + S-sulfanyl-L-cysteinyl-[cysteine desulfurase] + AH2 = [ThiS sulfur-carrier protein]-C-terminal-Gly-aminoethanethioate + L-cysteinyl-[cysteine desulfurase] + A + AMP + 2 H(+). The protein operates within cofactor biosynthesis; thiamine diphosphate biosynthesis. Its function is as follows. Catalyzes the ATP-dependent transfer of a sulfur to tRNA to produce 4-thiouridine in position 8 of tRNAs, which functions as a near-UV photosensor. Also catalyzes the transfer of sulfur to the sulfur carrier protein ThiS, forming ThiS-thiocarboxylate. This is a step in the synthesis of thiazole, in the thiamine biosynthesis pathway. The sulfur is donated as persulfide by IscS. In Clostridium kluyveri (strain NBRC 12016), this protein is Probable tRNA sulfurtransferase.